The sequence spans 340 residues: Glycerol-3-phosphate dehydrogenase [NAD(P)+] (340 aa).

Residues Ser14, Phe15, Arg35, and Lys108 each coordinate NADPH. Sn-glycerol 3-phosphate-binding residues include Lys108 and Gly136. Residue Ala140 participates in NADPH binding. Lys191, Asp244, Ser254, Arg255, and Asn256 together coordinate sn-glycerol 3-phosphate. The Proton acceptor role is filled by Lys191. An NADPH-binding site is contributed by Arg255. The NADPH site is built by Val279 and Glu281.

Belongs to the NAD-dependent glycerol-3-phosphate dehydrogenase family.

The protein resides in the cytoplasm. The catalysed reaction is sn-glycerol 3-phosphate + NAD(+) = dihydroxyacetone phosphate + NADH + H(+). It carries out the reaction sn-glycerol 3-phosphate + NADP(+) = dihydroxyacetone phosphate + NADPH + H(+). It functions in the pathway membrane lipid metabolism; glycerophospholipid metabolism. Its function is as follows. Catalyzes the reduction of the glycolytic intermediate dihydroxyacetone phosphate (DHAP) to sn-glycerol 3-phosphate (G3P), the key precursor for phospholipid synthesis. The chain is Glycerol-3-phosphate dehydrogenase [NAD(P)+] from Azotobacter vinelandii (strain DJ / ATCC BAA-1303).